The primary structure comprises 761 residues: Xaa-Pro dipeptidyl-peptidase (761 aa).

Catalysis depends on charge relay system residues Ser347, Asp467, and His497.

This sequence belongs to the peptidase S15 family. As to quaternary structure, homodimer.

Its subcellular location is the cytoplasm. It carries out the reaction Hydrolyzes Xaa-Pro-|- bonds to release unblocked, N-terminal dipeptides from substrates including Ala-Pro-|-p-nitroanilide and (sequentially) Tyr-Pro-|-Phe-Pro-|-Gly-Pro-|-Ile.. In terms of biological role, removes N-terminal dipeptides sequentially from polypeptides having unsubstituted N-termini provided that the penultimate residue is proline. The sequence is that of Xaa-Pro dipeptidyl-peptidase from Streptococcus agalactiae serotype Ia (strain ATCC 27591 / A909 / CDC SS700).